Reading from the N-terminus, the 607-residue chain is Elongation factor 4 (607 aa).

A tr-type G domain is found at 11 to 193 (SKIRNFSIIA…QIVEKVPAPT (183 aa)). Residues 23–28 (DHGKST) and 140–143 (NKID) contribute to the GTP site.

Belongs to the TRAFAC class translation factor GTPase superfamily. Classic translation factor GTPase family. LepA subfamily.

It is found in the cell membrane. It carries out the reaction GTP + H2O = GDP + phosphate + H(+). Required for accurate and efficient protein synthesis under certain stress conditions. May act as a fidelity factor of the translation reaction, by catalyzing a one-codon backward translocation of tRNAs on improperly translocated ribosomes. Back-translocation proceeds from a post-translocation (POST) complex to a pre-translocation (PRE) complex, thus giving elongation factor G a second chance to translocate the tRNAs correctly. Binds to ribosomes in a GTP-dependent manner. The sequence is that of Elongation factor 4 from Bacillus cereus (strain ZK / E33L).